The following is a 55-amino-acid chain: Large ribosomal subunit protein bL33m (55 aa).

Belongs to the bacterial ribosomal protein bL33 family. As to quaternary structure, component of the mitochondrial large ribosomal subunit (mt-LSU). Mature yeast 74S mitochondrial ribosomes consist of a small (37S) and a large (54S) subunit. The 37S small subunit contains a 15S ribosomal RNA (15S mt-rRNA) and at least 32 different proteins. The 54S large subunit contains a 21S rRNA (21S mt-rRNA) and at least 45 different proteins. bL33m stabilizes the tRNA acceptor stem in the E-site.

The protein resides in the mitochondrion. Component of the mitochondrial ribosome (mitoribosome), a dedicated translation machinery responsible for the synthesis of mitochondrial genome-encoded proteins, including at least some of the essential transmembrane subunits of the mitochondrial respiratory chain. The mitoribosomes are attached to the mitochondrial inner membrane and translation products are cotranslationally integrated into the membrane. The protein is Large ribosomal subunit protein bL33m (mrpl39) of Schizosaccharomyces pombe (strain 972 / ATCC 24843) (Fission yeast).